The following is a 185-amino-acid chain: Ribosome-recycling factor (185 aa).

It belongs to the RRF family.

The protein localises to the cytoplasm. In terms of biological role, responsible for the release of ribosomes from messenger RNA at the termination of protein biosynthesis. May increase the efficiency of translation by recycling ribosomes from one round of translation to another. The chain is Ribosome-recycling factor from Vibrio parahaemolyticus serotype O3:K6 (strain RIMD 2210633).